Consider the following 578-residue polypeptide: MIRTSVRRVVVNSNKFDVRSISNSSIRFNVPNNQRTPPPAVRPPTSPIIVTEGGPKGGSQKQKKKFSFAGFLFKTAFWASVVYGGTLFVATKNDKVMDFIMDKQPPYYEELLNVIEHGSIEDLKRQLRDTQHKISNFDFKLPSKAKIDEFTHELESRGENLIEETKRKLGTSTGAKPRQAIPEGNSAPTPAEQLQKPVETIHKTVDHLPLIQLDKGIASSVDSSIKSTIKSFNDLILSIDAGSQSGNESLMREITENVSKLSSKLNKLTSSFDEELSSKLKISQSELLSSYTKKELELTENLLHQFHHEKAQMEKKLGSRLDQEIEATKQTISQAAVNAVSMMRVEQTKNFEKLIKGKIDQERDGRLANLDKLNSRITELENFSTSLESQLVANHQKSLIQQSLTKLKSLLLGASSEQEKPRLISPYVDNLAKVSHESKDELIALALQDLQPLLSRESTQSILSTPQLLTRWEQLVPELRSASLLPPNAGLLGHLSSMLFSKLLFPVKGAKPDGKDIESVIGRVESSLARGELDVAVEEAANLKGWSRKLADDWVKEGRKKLEIEFLMKIIDAESKIL.

A mitochondrion-targeting transit peptide spans 1-28; the sequence is MIRTSVRRVVVNSNKFDVRSISNSSIRF. Residues 29–68 are Mitochondrial matrix-facing; the sequence is NVPNNQRTPPPAVRPPTSPIIVTEGGPKGGSQKQKKKFSF. Residues 69–91 traverse the membrane as a helical segment; that stretch reads AGFLFKTAFWASVVYGGTLFVAT. The Mitochondrial intermembrane segment spans residues 92-578; that stretch reads KNDKVMDFIM…KIIDAESKIL (487 aa). Residues 169-191 are disordered; that stretch reads LGTSTGAKPRQAIPEGNSAPTPA. The stretch at 248–317 forms a coiled coil; sequence ESLMREITEN…HEKAQMEKKL (70 aa).

The protein belongs to the MICOS complex subunit Mic60 family. As to quaternary structure, component of the mitochondrial contact site and cristae organizing system (MICOS) complex.

The protein resides in the mitochondrion inner membrane. Component of the MICOS complex, a large protein complex of the mitochondrial inner membrane that plays crucial roles in the maintenance of crista junctions, inner membrane architecture, and formation of contact sites to the outer membrane. Plays a role in keeping cristae membranes connected to the inner boundary membrane. Also promotes protein import via the mitochondrial intermembrane space assembly (MIA) pathway. This Debaryomyces hansenii (strain ATCC 36239 / CBS 767 / BCRC 21394 / JCM 1990 / NBRC 0083 / IGC 2968) (Yeast) protein is MICOS complex subunit MIC60 (MIC60).